Consider the following 507-residue polypeptide: Polygalacturonase (507 aa).

The N-terminal stretch at 1-20 (MSMKFMAALAFLALQLIVMA) is a signal peptide. Positions 21–54 (AGEDQSAQIMLDSDTKQYHRSSRNLRKRVHHARH) are excised as a propeptide. PbH1 repeat units follow at residues 215–241 (CDGVKIQGIKIKAPRDSPNTDGIDIFA), 242–263 (SKRFEIEKCTIGTGDDCVAVGT), 265–285 (SSNITIKDLTCGPGHGMSIGS), 295–316 (VSFVHLDGAKFIDTQNGLRIKT), 324–345 (ASHITYENVEMINAENPILINQ), and 358–385 (RSAVKIQDVTFKNIHGTSATTAAIQLMC). Residue Asp256 is the Proton donor of the active site. Asn267 is a glycosylation site (N-linked (GlcNAc...) asparagine). Residue His279 is part of the active site.

It belongs to the glycosyl hydrolase 28 family.

The protein localises to the secreted. Its subcellular location is the cell wall. It catalyses the reaction (1,4-alpha-D-galacturonosyl)n+m + H2O = (1,4-alpha-D-galacturonosyl)n + (1,4-alpha-D-galacturonosyl)m.. The sequence is that of Polygalacturonase (JNA2) from Juniperus ashei (Ozark white cedar).